We begin with the raw amino-acid sequence, 65 residues long: Trypsin inhibitor 1 (65 aa).

Intrachain disulfides connect Cys-39-Cys-56, Cys-46-Cys-58, and Cys-52-Cys-64.

This sequence belongs to the protease inhibitor I7 (squash-type serine protease inhibitor) family.

It localises to the secreted. Inhibits trypsin. The chain is Trypsin inhibitor 1 from Trichosanthes kirilowii (Chinese snake gourd).